The sequence spans 189 residues: Large ribosomal subunit protein eL18 (189 aa).

The protein belongs to the eukaryotic ribosomal protein eL18 family.

The protein localises to the cytoplasm. This is Large ribosomal subunit protein eL18 (RpL18) from Anopheles gambiae (African malaria mosquito).